The sequence spans 799 residues: Ribosome-releasing factor 2, mitochondrial (799 aa).

The tr-type G domain maps to 19–306; that stretch reads SKIRNIGIIA…AVVNYLPSPL (288 aa). GTP contacts are provided by residues 28 to 35, 93 to 97, and 145 to 148; these read AHIDAGKT, DTPGH, and NKMD.

It belongs to the TRAFAC class translation factor GTPase superfamily. Classic translation factor GTPase family. EF-G/EF-2 subfamily.

The protein localises to the mitochondrion. Mitochondrial GTPase that mediates the disassembly of ribosomes from messenger RNA at the termination of mitochondrial protein biosynthesis. Not involved in the GTP-dependent ribosomal translocation step during translation elongation. The chain is Ribosome-releasing factor 2, mitochondrial from Vanderwaltozyma polyspora (strain ATCC 22028 / DSM 70294 / BCRC 21397 / CBS 2163 / NBRC 10782 / NRRL Y-8283 / UCD 57-17) (Kluyveromyces polysporus).